A 311-amino-acid chain; its full sequence is Thioredoxin reductase (311 aa).

FAD is bound by residues 31–39 and 32–39; these read FEKGMPGGQ and EKGMPGGQ. Cysteine 133 and cysteine 136 are disulfide-bonded. 281 to 290 is an FAD binding site; it reads DIRIFAPKQV.

This sequence belongs to the class-II pyridine nucleotide-disulfide oxidoreductase family. Homodimer. It depends on FAD as a cofactor.

It localises to the cytoplasm. The catalysed reaction is [thioredoxin]-dithiol + NADP(+) = [thioredoxin]-disulfide + NADPH + H(+). The polypeptide is Thioredoxin reductase (trxB) (Helicobacter pylori (strain J99 / ATCC 700824) (Campylobacter pylori J99)).